The primary structure comprises 385 residues: Succinyl-diaminopimelate desuccinylase (385 aa).

H78 is a Zn(2+) binding site. D80 is an active-site residue. Position 110 (D110) interacts with Zn(2+). Catalysis depends on E144, which acts as the Proton acceptor. E145, E173, and H358 together coordinate Zn(2+).

It belongs to the peptidase M20A family. DapE subfamily. As to quaternary structure, homodimer. Zn(2+) serves as cofactor. Requires Co(2+) as cofactor.

The enzyme catalyses N-succinyl-(2S,6S)-2,6-diaminopimelate + H2O = (2S,6S)-2,6-diaminopimelate + succinate. It participates in amino-acid biosynthesis; L-lysine biosynthesis via DAP pathway; LL-2,6-diaminopimelate from (S)-tetrahydrodipicolinate (succinylase route): step 3/3. In terms of biological role, catalyzes the hydrolysis of N-succinyl-L,L-diaminopimelic acid (SDAP), forming succinate and LL-2,6-diaminopimelate (DAP), an intermediate involved in the bacterial biosynthesis of lysine and meso-diaminopimelic acid, an essential component of bacterial cell walls. The sequence is that of Succinyl-diaminopimelate desuccinylase from Gluconacetobacter diazotrophicus (strain ATCC 49037 / DSM 5601 / CCUG 37298 / CIP 103539 / LMG 7603 / PAl5).